The chain runs to 156 residues: Endoribonuclease YbeY (156 aa).

Residues His-117, His-121, and His-127 each contribute to the Zn(2+) site.

It belongs to the endoribonuclease YbeY family. Requires Zn(2+) as cofactor.

The protein resides in the cytoplasm. In terms of biological role, single strand-specific metallo-endoribonuclease involved in late-stage 70S ribosome quality control and in maturation of the 3' terminus of the 16S rRNA. This chain is Endoribonuclease YbeY, found in Shewanella pealeana (strain ATCC 700345 / ANG-SQ1).